The primary structure comprises 139 residues: Probable disulfide formation protein C 1 (139 aa).

A helical transmembrane segment spans residues 8–27 (EYALFTAWGASFIATLGSLY). C37 and C40 are disulfide-bonded. A run of 2 helical transmembrane segments spans residues 42–61 (YQRI…VVKK) and 68–85 (YSLP…YHYA). Cysteines 99 and 104 form a disulfide. Residues 113-135 (GFVTIPFLALIGFITIAVCSFIV) traverse the membrane as a helical segment.

This sequence belongs to the DsbB family. BdbC subfamily.

It is found in the cell membrane. Functionally, required for disulfide bond formation in some proteins. The sequence is that of Probable disulfide formation protein C 1 (bdbC1) from Bacillus cereus (strain ATCC 10987 / NRS 248).